The following is a 137-amino-acid chain: Small ribosomal subunit protein bS6 (137 aa).

The disordered stretch occupies residues 99 to 137; the sequence is LSPMKAAESREDRRSGGDDRPRRSADSEERQSASQDEEE. Over residues 105–129 the composition is skewed to basic and acidic residues; it reads AESREDRRSGGDDRPRRSADSEERQ.

The protein belongs to the bacterial ribosomal protein bS6 family.

Binds together with bS18 to 16S ribosomal RNA. The protein is Small ribosomal subunit protein bS6 of Marinobacter nauticus (strain ATCC 700491 / DSM 11845 / VT8) (Marinobacter aquaeolei).